A 333-amino-acid chain; its full sequence is MKLYEHDGVDLEDGKTVKSGGDKPIPRKIHNRALLSGLAYCISSCSMILVNKFVLSSYNFNAGIFLMLYQNFVSVIIVVGLSLMGLITTEPLTLRLMKVWFPVNVIFVGMLITSMFSLKYINVAMVTVLKNVTNVITAVGEMYLFNKQHDNRVWAALFLMIISAVSGGITDLSFNAVGYAWQIANCFLTASYSLTLRKTMDTAKQVTQSGNLNEFSMVLLNNTLSLPLGLLLSYFFNEMDYLYQTPLLRLPSFWMVMTLSGLLGLAISFTSMWFLHQTGATTYSLVGSLNKIPLSIAGIVLFNVPTSLQNSASILFGLVAGVVFARAKMREKS.

9 consecutive transmembrane segments (helical) span residues 33–55 (ALLS…KFVL), 62–84 (AGIF…LSLM), 99–121 (VWFP…LKYI), 153–170 (VWAA…GGIT), 174–196 (FNAV…SLTL), 216–238 (SMVL…FFNE), 253–275 (FWMV…MWFL), 282–304 (TYSL…LFNV), and 308–325 (LQNS…VVFA).

Belongs to the nucleotide-sugar transporter family. GDP-Mannose:GMP antiporter (GMA) (TC 2.A.7.13) subfamily.

The protein resides in the golgi apparatus membrane. Involved in the import of GDP-mannose from the cytoplasm into the Golgi lumen. Required for the luminal synthesis of a variety of plant cell surface components. Is required for the correct mannosylation of the glycosylinositol phosphoceramides (GIPC). Can indifferently transport GDP-mannose, GDP-Glucose, GDP-Fucose or GDP-Galactose in vitro. In Arabidopsis thaliana (Mouse-ear cress), this protein is GDP-mannose transporter GONST1.